A 232-amino-acid polypeptide reads, in one-letter code: MKVLILACRVALALAREKEEFKTAGEALESISSSEESITHINKQKIEKFKIEEQQQTEDEQQDKIYTFPQPQSLVYSHTEPIPYPILPQNFLPPLQPAVMVPFLQPKVMDVPKTKETIIPKRKEMPLLQSPVVPFTESQSLTLTDLENLHLPLPLLQSLMYQIPQPVPQTPMIPPQSLLSLSQFKVLPVPQQMVPYPQRAMPVQAVLPFQEPVPDPVRGLHPVPQPLVPVIA.

The first 15 residues, 1-15 (MKVLILACRVALALA), serve as a signal peptide directing secretion. Ser30, Ser32, Ser33, and Ser34 each carry phosphoserine.

This sequence belongs to the beta-casein family. In terms of tissue distribution, mammary gland specific. Secreted in milk.

The protein localises to the secreted. Functionally, important role in determination of the surface properties of the casein micelles. This is Beta-casein (CSN2) from Camelus dromedarius (Dromedary).